We begin with the raw amino-acid sequence, 257 residues long: Imidazole glycerol phosphate synthase subunit HisF (257 aa).

Catalysis depends on residues Asp-11 and Asp-130.

The protein belongs to the HisA/HisF family. In terms of assembly, heterodimer of HisH and HisF.

The protein localises to the cytoplasm. The enzyme catalyses 5-[(5-phospho-1-deoxy-D-ribulos-1-ylimino)methylamino]-1-(5-phospho-beta-D-ribosyl)imidazole-4-carboxamide + L-glutamine = D-erythro-1-(imidazol-4-yl)glycerol 3-phosphate + 5-amino-1-(5-phospho-beta-D-ribosyl)imidazole-4-carboxamide + L-glutamate + H(+). Its pathway is amino-acid biosynthesis; L-histidine biosynthesis; L-histidine from 5-phospho-alpha-D-ribose 1-diphosphate: step 5/9. Functionally, IGPS catalyzes the conversion of PRFAR and glutamine to IGP, AICAR and glutamate. The HisF subunit catalyzes the cyclization activity that produces IGP and AICAR from PRFAR using the ammonia provided by the HisH subunit. This is Imidazole glycerol phosphate synthase subunit HisF from Vibrio campbellii (strain ATCC BAA-1116).